The following is a 1004-amino-acid chain: 2-oxoglutarate dehydrogenase E1 component (1004 aa).

Belongs to the alpha-ketoglutarate dehydrogenase family. As to quaternary structure, homodimer. Part of the 2-oxoglutarate dehydrogenase (OGDH) complex composed of E1 (2-oxoglutarate dehydrogenase), E2 (dihydrolipoamide succinyltransferase) and E3 (dihydrolipoamide dehydrogenase); the complex contains multiple copies of the three enzymatic components (E1, E2 and E3). The cofactor is thiamine diphosphate.

It catalyses the reaction N(6)-[(R)-lipoyl]-L-lysyl-[protein] + 2-oxoglutarate + H(+) = N(6)-[(R)-S(8)-succinyldihydrolipoyl]-L-lysyl-[protein] + CO2. Its function is as follows. E1 component of the 2-oxoglutarate dehydrogenase (OGDH) complex which catalyzes the decarboxylation of 2-oxoglutarate, the first step in the conversion of 2-oxoglutarate to succinyl-CoA and CO(2). The protein is 2-oxoglutarate dehydrogenase E1 component of Brucella ovis (strain ATCC 25840 / 63/290 / NCTC 10512).